Here is a 448-residue protein sequence, read N- to C-terminus: Probable xyloglucan 6-xylosyltransferase 1 (448 aa).

Residues 1–19 (MWVAERVVGERRMREIQRF) lie on the Cytoplasmic side of the membrane. A helical; Signal-anchor for type II membrane protein membrane pass occupies residues 20–42 (ARNAKLTVVCLLLTVVVLRGTVG). At 43-448 (AGKFGTPQQD…AFKAMKTTST (406 aa)) the chain is on the lumenal side. Positions 71–113 (HHDALSRGGGSSSSSGRAAQRDDEPDPPPRTLRDPPYTLGPKI) are disordered. Asn-421 carries an N-linked (GlcNAc...) asparagine glycan.

Belongs to the glycosyltransferase 34 family.

Its subcellular location is the golgi apparatus membrane. The catalysed reaction is Transfers an alpha-D-xylosyl residue from UDP-D-xylose to a glucose residue in xyloglucan, forming an alpha-(1-&gt;6)-D-xylosyl-D-glucose linkage.. Probable xyloglucan xylosyltransferase involved in the biosynthesis of xyloglucan in roots. This is Probable xyloglucan 6-xylosyltransferase 1 from Oryza sativa subsp. indica (Rice).